A 313-amino-acid polypeptide reads, in one-letter code: Intracellular endo-alpha-(1-&gt;5)-L-arabinanase (313 aa).

Asp-27 functions as the Proton acceptor in the catalytic mechanism. Substrate is bound by residues Asp-27, Gly-105, 144-147 (NAID), and 164-166 (SFW). The active-site Proton donor is Glu-201. His-271 is a binding site for Ca(2+).

This sequence belongs to the glycosyl hydrolase 43 family. Monomer. Ca(2+) is required as a cofactor.

It localises to the cytoplasm. It carries out the reaction Endohydrolysis of (1-&gt;5)-alpha-arabinofuranosidic linkages in (1-&gt;5)-arabinans.. It functions in the pathway glycan metabolism; L-arabinan degradation. Functionally, involved in the degradation of arabinan and is a key enzyme in the complete degradation of the plant cell wall. Catalyzes the cleavage of endo alpha-(1-&gt;5)-L-arabinofuranosyl residues in debranched arabinan. The chain is Intracellular endo-alpha-(1-&gt;5)-L-arabinanase (abn-ts) from Geobacillus thermodenitrificans.